The sequence spans 155 residues: Interleukin-2 (155 aa).

The N-terminal stretch at 1–20 (MYSRQLASCVALALVLLANS) is a signal peptide. T23 is a glycosylation site (O-linked (GalNAc...) threonine). A disulfide bond links C78 and C126.

This sequence belongs to the IL-2 family.

It is found in the secreted. Functionally, cytokine produced by activated CD4-positive helper T-cells and to a lesser extend activated CD8-positive T-cells and natural killer (NK) cells that plays pivotal roles in the immune response and tolerance. Binds to a receptor complex composed of either the high-affinity trimeric IL-2R (IL2RA/CD25, IL2RB/CD122 and IL2RG/CD132) or the low-affinity dimeric IL-2R (IL2RB and IL2RG). Interaction with the receptor leads to oligomerization and conformation changes in the IL-2R subunits resulting in downstream signaling starting with phosphorylation of JAK1 and JAK3. In turn, JAK1 and JAK3 phosphorylate the receptor to form a docking site leading to the phosphorylation of several substrates including STAT5. This process leads to activation of several pathways including STAT, phosphoinositide-3-kinase/PI3K and mitogen-activated protein kinase/MAPK pathways. Functions as a T-cell growth factor and can increase NK-cell cytolytic activity as well. Promotes strong proliferation of activated B-cells and subsequently immunoglobulin production. Plays a pivotal role in regulating the adaptive immune system by controlling the survival and proliferation of regulatory T-cells, which are required for the maintenance of immune tolerance. Moreover, participates in the differentiation and homeostasis of effector T-cell subsets, including Th1, Th2, Th17 as well as memory CD8-positive T-cells. This chain is Interleukin-2 (IL2), found in Meriones unguiculatus (Mongolian jird).